The chain runs to 278 residues: Bicarbonate transport system permease protein CmpB (278 aa).

7 helical membrane-spanning segments follow: residues 24 to 44 (LDGI…WQIF), 93 to 113 (VAQG…LVGL), 124 to 144 (LFQF…LVAF), 151 to 171 (AIFV…AEGV), 196 to 216 (VVLP…IGLS), 217 to 237 (WLAI…GFFI), and 249 to 269 (IILA…FVAW). The 182-residue stretch at 86-267 (TIASLTRVAQ…AVGLLLDRFV (182 aa)) folds into the ABC transmembrane type-1 domain.

Belongs to the binding-protein-dependent transport system permease family. As to quaternary structure, the complex is composed of two ATP-binding proteins (CmpC and CmpD), a transmembrane protein (CmpB) and a solute-binding protein (CmpA).

Its subcellular location is the cell inner membrane. In terms of biological role, part of the ABC transporter complex CmpABCD involved in bicarbonate transport. Probably responsible for the translocation of the substrate across the membrane. This is Bicarbonate transport system permease protein CmpB (cmpB) from Synechococcus sp. (strain ATCC 27144 / PCC 6301 / SAUG 1402/1) (Anacystis nidulans).